Consider the following 287-residue polypeptide: Nucleotide-binding protein HEAR2885 (287 aa).

8–15 (GISGSGKS) is an ATP binding site. Residue 57-60 (DVRS) coordinates GTP.

This sequence belongs to the RapZ-like family.

Displays ATPase and GTPase activities. This is Nucleotide-binding protein HEAR2885 from Herminiimonas arsenicoxydans.